The chain runs to 137 residues: Small ribosomal subunit protein uS12 (137 aa).

Residues 1–55 (MPTINQLVRKPRQSKSKKSDSPALNRNFNSKKKKFTDLNSPQKRGVCTRVGTMTP) are disordered. D102 is subject to 3-methylthioaspartic acid. Positions 118–137 (SGVDGRRQGRSLYGTKKPKK) are disordered.

Belongs to the universal ribosomal protein uS12 family. In terms of assembly, part of the 30S ribosomal subunit. Contacts proteins S8 and S17. May interact with IF1 in the 30S initiation complex.

Its function is as follows. With S4 and S5 plays an important role in translational accuracy. In terms of biological role, interacts with and stabilizes bases of the 16S rRNA that are involved in tRNA selection in the A site and with the mRNA backbone. Located at the interface of the 30S and 50S subunits, it traverses the body of the 30S subunit contacting proteins on the other side and probably holding the rRNA structure together. The combined cluster of proteins S8, S12 and S17 appears to hold together the shoulder and platform of the 30S subunit. The chain is Small ribosomal subunit protein uS12 from Staphylococcus saprophyticus subsp. saprophyticus (strain ATCC 15305 / DSM 20229 / NCIMB 8711 / NCTC 7292 / S-41).